Reading from the N-terminus, the 155-residue chain is U4/U6.U5 small nuclear ribonucleoprotein 27 kDa protein (155 aa).

Basic residues-rich tracts occupy residues 1 to 31 (MGRSRSRSPRRERRRSRSTSRERERRRRERS) and 39 to 59 (RRSRSRSPHRRRSRSPRRHRS). A disordered region spans residues 1–97 (MGRSRSRSPR…ITEEDLEGKT (97 aa)). Residues Ser61 and Ser65 each carry the phosphoserine modification. Basic and acidic residues predominate over residues 66–97 (RLKERRDEEKKETKETKSKERQITEEDLEGKT). Residues Ser111, Ser114, and Ser132 each carry the phosphoserine modification.

Belongs to the SNUT3 family. In terms of assembly, part of a tri-snRNP complex. In terms of processing, phosphorylated in vitro by snRNP-associated protein kinase.

The protein localises to the nucleus. In terms of biological role, may play a role in mRNA splicing. This chain is U4/U6.U5 small nuclear ribonucleoprotein 27 kDa protein (SNRNP27), found in Homo sapiens (Human).